A 370-amino-acid polypeptide reads, in one-letter code: Aminomethyltransferase (370 aa).

Belongs to the GcvT family. As to quaternary structure, the glycine cleavage system is composed of four proteins: P, T, L and H.

The catalysed reaction is N(6)-[(R)-S(8)-aminomethyldihydrolipoyl]-L-lysyl-[protein] + (6S)-5,6,7,8-tetrahydrofolate = N(6)-[(R)-dihydrolipoyl]-L-lysyl-[protein] + (6R)-5,10-methylene-5,6,7,8-tetrahydrofolate + NH4(+). Its function is as follows. The glycine cleavage system catalyzes the degradation of glycine. The sequence is that of Aminomethyltransferase from Clostridium botulinum (strain Langeland / NCTC 10281 / Type F).